A 94-amino-acid chain; its full sequence is Large ribosomal subunit protein uL23 (94 aa).

It belongs to the universal ribosomal protein uL23 family. As to quaternary structure, part of the 50S ribosomal subunit. Contacts protein L29, and trigger factor when it is bound to the ribosome.

In terms of biological role, one of the early assembly proteins it binds 23S rRNA. One of the proteins that surrounds the polypeptide exit tunnel on the outside of the ribosome. Forms the main docking site for trigger factor binding to the ribosome. This is Large ribosomal subunit protein uL23 from Roseiflexus sp. (strain RS-1).